The chain runs to 192 residues: Adenylate kinase (192 aa).

Residue 10–15 participates in ATP binding; it reads GAGKGT. Residues 30–59 are NMP; the sequence is STGDMLREAIEKETEIGKQAKIFIESGALV. AMP-binding positions include T31, R36, 57–59, 85–88, and Q92; these read ALV and GYPR. The interval 126 to 142 is LID; it reads KRVEEVVAVGGKIRSDD. Residue R127 participates in ATP binding. AMP is bound by residues R139 and R150. ATP is bound at residue A178.

This sequence belongs to the adenylate kinase family. Monomer.

Its subcellular location is the cytoplasm. It carries out the reaction AMP + ATP = 2 ADP. The protein operates within purine metabolism; AMP biosynthesis via salvage pathway; AMP from ADP: step 1/1. Functionally, catalyzes the reversible transfer of the terminal phosphate group between ATP and AMP. Plays an important role in cellular energy homeostasis and in adenine nucleotide metabolism. The sequence is that of Adenylate kinase from Bartonella bacilliformis (strain ATCC 35685 / KC583 / Herrer 020/F12,63).